We begin with the raw amino-acid sequence, 295 residues long: 5,10-methylenetetrahydrofolate reductase (295 aa).

Glutamate 28 acts as the Proton donor/acceptor in catalysis. Residue threonine 59 coordinates NADH. FAD contacts are provided by histidine 89, arginine 119, glycine 120, aspartate 121, alanine 133, tyrosine 153, histidine 157, alanine 160, aspartate 166, asparagine 169, arginine 172, and lysine 173. Aspartate 121 contacts (6S)-5-methyl-5,6,7,8-tetrahydrofolate. Position 184 (glutamine 184) interacts with NADH. Positions 184, 220, and 280 each coordinate (6S)-5-methyl-5,6,7,8-tetrahydrofolate.

It belongs to the methylenetetrahydrofolate reductase family. FAD is required as a cofactor.

It catalyses the reaction (6S)-5-methyl-5,6,7,8-tetrahydrofolate + NAD(+) = (6R)-5,10-methylene-5,6,7,8-tetrahydrofolate + NADH + H(+). It functions in the pathway one-carbon metabolism; tetrahydrofolate interconversion. Its pathway is amino-acid biosynthesis; L-methionine biosynthesis via de novo pathway. Its function is as follows. Catalyzes the NADH-dependent reduction of 5,10-methylenetetrahydrofolate to 5-methyltetrahydrofolate. Is required to provide the methyl group necessary for methionine synthetase to convert homocysteine to methionine; the methyl group is given by 5-methyltetrahydrofolate. This chain is 5,10-methylenetetrahydrofolate reductase (metF), found in Buchnera aphidicola subsp. Baizongia pistaciae (strain Bp).